The following is a 586-amino-acid chain: Inner membrane protein YejM (586 aa).

The Cytoplasmic portion of the chain corresponds to 1 to 20; it reads MVTHRQRYREKVSQMVSWGH. The chain crosses the membrane as a helical span at residues 21–43; the sequence is WFALFNILLSLVIGSRYLFIADW. Residues 44 to 57 are Periplasmic-facing; sequence PTTLAGRIYSYVSI. A helical transmembrane segment spans residues 58-80; the sequence is IGHFSFLVFATYLLILFPLTFIV. The Cytoplasmic segment spans residues 81–84; the sequence is GSQR. The helical transmembrane segment at 85–103 threads the bilayer; sequence LMRFLSVILATAGMTLLLI. At 104-134 the chain is on the periplasmic side; the sequence is DSEVFTRFHLHLNPIVWQLVINPDENEMARD. The chain crosses the membrane as a helical span at residues 135-157; sequence WQLMFISVPVILLLELVFATWSW. The Cytoplasmic portion of the chain corresponds to 158 to 168; it reads QKLRSLTRRRR. Residues 169–191 traverse the membrane as a helical segment; the sequence is FARPLAAFLFIAFIASHVVYIWA. Residues 192–586 are Periplasmic-facing; it reads DANFYRPITM…LTDEKRFIAN (395 aa).

The protein to H.influenzae HI_0842.

The protein localises to the cell inner membrane. The protein is Inner membrane protein YejM (yejM) of Escherichia coli O157:H7.